The primary structure comprises 259 residues: Tryptophan synthase alpha chain (259 aa).

Residues Glu35 and Asp46 each act as proton acceptor in the active site.

The protein belongs to the TrpA family. Tetramer of two alpha and two beta chains.

The catalysed reaction is (1S,2R)-1-C-(indol-3-yl)glycerol 3-phosphate + L-serine = D-glyceraldehyde 3-phosphate + L-tryptophan + H2O. It functions in the pathway amino-acid biosynthesis; L-tryptophan biosynthesis; L-tryptophan from chorismate: step 5/5. In terms of biological role, the alpha subunit is responsible for the aldol cleavage of indoleglycerol phosphate to indole and glyceraldehyde 3-phosphate. The polypeptide is Tryptophan synthase alpha chain (Methanococcus maripaludis (strain C5 / ATCC BAA-1333)).